Consider the following 208-residue polypeptide: Small ribosomal subunit protein uS5 (208 aa).

The tract at residues 1-38 is disordered; sequence MPGRERRDGGRSADDNQKKNDRRGGRRDDRRNQQQDER. The S5 DRBM domain maps to 41–104; the sequence is YIERVVTINR…EEARKNFFRV (64 aa).

Belongs to the universal ribosomal protein uS5 family. As to quaternary structure, part of the 30S ribosomal subunit. Contacts proteins S4 and S8.

In terms of biological role, with S4 and S12 plays an important role in translational accuracy. Its function is as follows. Located at the back of the 30S subunit body where it stabilizes the conformation of the head with respect to the body. This Corynebacterium diphtheriae (strain ATCC 700971 / NCTC 13129 / Biotype gravis) protein is Small ribosomal subunit protein uS5.